The chain runs to 644 residues: Protein ETHYLENE-INSENSITIVE 3-like 1b (644 aa).

2 disordered regions span residues 47 to 75 (QCVM…DDDV) and 97 to 131 (ELQL…KMSR). Residues 66–75 (AGEDDSDDDV) are compositionally biased toward acidic residues.

Belongs to the EIN3 family. Highly expressed in roots. Expressed at low levels in leaves and panicles.

Its subcellular location is the nucleus. Transcription factor acting as a positive regulator in the ethylene response pathway. Involved in wound signaling by binding specifically to the DNA sequence 5'-ATGTACCT-3' found in the promoter of some wound-inducible genes. Binds directly to the DNA sequence 5'-TGTTACAAATACC-3' in the promoter of the GA20OX2 gene to activate its expression at the transcriptional level during ethylene signaling. The sequence is that of Protein ETHYLENE-INSENSITIVE 3-like 1b from Oryza sativa subsp. japonica (Rice).